The sequence spans 183 residues: Porphobilinogen deaminase (183 aa).

The protein belongs to the HMBS family. Monomer. Dipyrromethane is required as a cofactor.

The enzyme catalyses 4 porphobilinogen + H2O = hydroxymethylbilane + 4 NH4(+). Its pathway is porphyrin-containing compound metabolism; protoporphyrin-IX biosynthesis; coproporphyrinogen-III from 5-aminolevulinate: step 2/4. In terms of biological role, tetrapolymerization of the monopyrrole PBG into the hydroxymethylbilane pre-uroporphyrinogen in several discrete steps. This chain is Porphobilinogen deaminase (hemC), found in Yersinia intermedia.